The sequence spans 121 residues: Large ribosomal subunit protein bL19 (121 aa).

It belongs to the bacterial ribosomal protein bL19 family.

Its function is as follows. This protein is located at the 30S-50S ribosomal subunit interface and may play a role in the structure and function of the aminoacyl-tRNA binding site. This chain is Large ribosomal subunit protein bL19, found in Chlorobium phaeovibrioides (strain DSM 265 / 1930) (Prosthecochloris vibrioformis (strain DSM 265)).